The chain runs to 300 residues: Lysenin-related protein 3 (300 aa).

Residues 12 to 35 form an N-terminal cap domain region; it reads EEIEVDVVAVWKEGYVYENRGDTS. The interval 36 to 109 is beta-hairpin domain; that stretch reads VEQKITMTKG…SQVIEHTVTI (74 aa). The N-terminal cap domain stretch occupies residues 110–158; the sequence is PPTSKFTRWKLNADVGGTDIEYMYLIDEVTPISVTQTIPQVIRSRAKIL. The interval 159-299 is C-terminal receptor-binding domain; the sequence is VGRQIHLGTT…EDKWILEVVN (141 aa). Positions 187, 229, 235, and 284 each coordinate an N-(acyl)-sphingosylphosphocholine. A disulfide bridge connects residues cysteine 274 and cysteine 285.

It belongs to the lysenin family. As to quaternary structure, binds to sphingomyelin as a monomer by using its C-terminal domain. Forms a nonamer when sphingomyelin/LRP-3 ratio is lower than ca 500. Oligomerization, but not binding, is influenced by the fluidity of sphingomyelin. Expressed by coelomocytes.

The protein resides in the secreted. It is found in the target cell membrane. Its function is as follows. Pore-forming toxin that specifically binds sphingomyelin in the plasma membrane of various cells. Has antibacterial and hemolytic activity. This chain is Lysenin-related protein 3, found in Eisenia fetida (Red wiggler worm).